Reading from the N-terminus, the 98-residue chain is Putative pterin-4-alpha-carbinolamine dehydratase (98 aa).

Belongs to the pterin-4-alpha-carbinolamine dehydratase family.

The enzyme catalyses (4aS,6R)-4a-hydroxy-L-erythro-5,6,7,8-tetrahydrobiopterin = (6R)-L-erythro-6,7-dihydrobiopterin + H2O. This Jannaschia sp. (strain CCS1) protein is Putative pterin-4-alpha-carbinolamine dehydratase.